We begin with the raw amino-acid sequence, 102 residues long: NADH-quinone oxidoreductase subunit K 1 (102 aa).

3 consecutive transmembrane segments (helical) span residues 5-25 (ISHYLTVSAILFTLGVFGIFL), 31-51 (IIILMSVELILLAVNINMVAF), and 65-85 (LFILTVAAAEAAIGLAILVVF).

This sequence belongs to the complex I subunit 4L family. As to quaternary structure, NDH-1 is composed of 14 different subunits. Subunits NuoA, H, J, K, L, M, N constitute the membrane sector of the complex.

The protein localises to the cell inner membrane. The enzyme catalyses a quinone + NADH + 5 H(+)(in) = a quinol + NAD(+) + 4 H(+)(out). Its function is as follows. NDH-1 shuttles electrons from NADH, via FMN and iron-sulfur (Fe-S) centers, to quinones in the respiratory chain. The immediate electron acceptor for the enzyme in this species is believed to be ubiquinone. Couples the redox reaction to proton translocation (for every two electrons transferred, four hydrogen ions are translocated across the cytoplasmic membrane), and thus conserves the redox energy in a proton gradient. The chain is NADH-quinone oxidoreductase subunit K 1 from Rhizobium meliloti (strain 1021) (Ensifer meliloti).